Reading from the N-terminus, the 282-residue chain is Probable endonuclease 4 (282 aa).

Zn(2+)-binding residues include histidine 67, histidine 107, glutamate 144, aspartate 178, histidine 181, histidine 215, aspartate 228, histidine 230, and glutamate 260.

The protein belongs to the AP endonuclease 2 family. Zn(2+) is required as a cofactor.

The catalysed reaction is Endonucleolytic cleavage to 5'-phosphooligonucleotide end-products.. Endonuclease IV plays a role in DNA repair. It cleaves phosphodiester bonds at apurinic or apyrimidinic (AP) sites, generating a 3'-hydroxyl group and a 5'-terminal sugar phosphate. This chain is Probable endonuclease 4, found in Methanoculleus marisnigri (strain ATCC 35101 / DSM 1498 / JR1).